Reading from the N-terminus, the 185-residue chain is Chromobox protein homolog 1 (185 aa).

Glycyl lysine isopeptide (Lys-Gly) (interchain with G-Cter in SUMO2) cross-links involve residues lysine 9 and lysine 33. One can recognise a Chromo 1 domain in the interval 21-79 (YVVEKVLDRRVVKGKVEYLLKWKGFSDEDNTWEPEENLDCPDLIAEFLQSQKTAHETDK). Residues 63 to 124 (LIAEFLQSQK…RGLEPERIIG (62 aa)) form a disordered region. Residues 73-89 (TAHETDKSEGGKRKADS) are compositionally biased toward basic and acidic residues. Phosphoserine occurs at positions 89 and 91. A compositionally biased stretch (basic and acidic residues) spans 96 to 121 (EESKPKKKKEESEKPRGFARGLEPER). Residues lysine 99 and lysine 150 each participate in a glycyl lysine isopeptide (Lys-Gly) (interchain with G-Cter in SUMO2) cross-link. Residues 117–175 (LEPERIIGATDSSGELMFLMKWKNSDEADLVPAKEANVKCPQVVISFYEERLTWHSYPS) enclose the Chromo 2; shadow subtype domain. Serine 175 carries the post-translational modification Phosphoserine.

As to quaternary structure, homodimer. Interacts directly with CHAF1A, EMSY, LBR, TIF1/TIF1A and TRIM28/TIF1B PXVXL motif via the chromoshadow domain. Interacts directly with histone H3 methylated at 'Lys-9' via the chromo domain. Interacts with SUV39H1 and SETDB1, KMT5B and KMT5C. Interacts with PRDM6. Interacts with POGZ. Interacts with CHAMP1. Interacts with INCENP. Interacts with SGO1; the CBX1 homodimer binds to one molecule of SGO1. Interacts with LRIF1 (via PxVxL motif). Interacts with HDGFL2. Interacts with CHD3. Interacts with CHD4. Post-translationally, not phosphorylated. Ubiquitinated. In terms of tissue distribution, expressed in all adult and embryonic tissues.

The protein localises to the nucleus. Component of heterochromatin. Recognizes and binds histone H3 tails methylated at 'Lys-9', leading to epigenetic repression. Interaction with lamin B receptor (LBR) can contribute to the association of the heterochromatin with the inner nuclear membrane. The sequence is that of Chromobox protein homolog 1 (CBX1) from Homo sapiens (Human).